The chain runs to 233 residues: Leucyl/phenylalanyl-tRNA--protein transferase (233 aa).

It belongs to the L/F-transferase family.

The protein localises to the cytoplasm. The enzyme catalyses N-terminal L-lysyl-[protein] + L-leucyl-tRNA(Leu) = N-terminal L-leucyl-L-lysyl-[protein] + tRNA(Leu) + H(+). It catalyses the reaction N-terminal L-arginyl-[protein] + L-leucyl-tRNA(Leu) = N-terminal L-leucyl-L-arginyl-[protein] + tRNA(Leu) + H(+). It carries out the reaction L-phenylalanyl-tRNA(Phe) + an N-terminal L-alpha-aminoacyl-[protein] = an N-terminal L-phenylalanyl-L-alpha-aminoacyl-[protein] + tRNA(Phe). Its function is as follows. Functions in the N-end rule pathway of protein degradation where it conjugates Leu, Phe and, less efficiently, Met from aminoacyl-tRNAs to the N-termini of proteins containing an N-terminal arginine or lysine. The protein is Leucyl/phenylalanyl-tRNA--protein transferase of Laribacter hongkongensis (strain HLHK9).